The chain runs to 291 residues: Phosphatidylglycerol--prolipoprotein diacylglyceryl transferase (291 aa).

Transmembrane regions (helical) follow at residues 21–41 (VSLHWYGLMYLVGFVFAMWLA), 60–80 (LLYAGFLGVFLGGRIGYVLFY), 96–116 (WDGGMSFHGGLIGVICVMIWF), 130–150 (FIAPLIPFGLGAGRLGNFING), 198–218 (SQLYELFLEGIVLFIILNLFI), 225–245 (GAVSGLFLIGYGAFRIIVEFF), and 260–280 (ISMGQILSIPMIVAGAAMMIW). An a 1,2-diacyl-sn-glycero-3-phospho-(1'-sn-glycerol)-binding site is contributed by R143.

It belongs to the Lgt family.

Its subcellular location is the cell inner membrane. It catalyses the reaction L-cysteinyl-[prolipoprotein] + a 1,2-diacyl-sn-glycero-3-phospho-(1'-sn-glycerol) = an S-1,2-diacyl-sn-glyceryl-L-cysteinyl-[prolipoprotein] + sn-glycerol 1-phosphate + H(+). Its pathway is protein modification; lipoprotein biosynthesis (diacylglyceryl transfer). Its function is as follows. Catalyzes the transfer of the diacylglyceryl group from phosphatidylglycerol to the sulfhydryl group of the N-terminal cysteine of a prolipoprotein, the first step in the formation of mature lipoproteins. The sequence is that of Phosphatidylglycerol--prolipoprotein diacylglyceryl transferase from Cronobacter sakazakii (strain ATCC BAA-894) (Enterobacter sakazakii).